Consider the following 265-residue polypeptide: MHAIILTMRVGIVGFGNMGQAFALCFSKKLGKENIIVTDKVQEKRNLATEMGIAFASDVKFLADNSDVVLVAVKPKDSQEVLQKLKDYKGIILSIMAGVSIEKMEKILGKDKKIVRVMPNVNVAVGSGVMAITDNGNLSEEERSKVEELLLSCGTLYRIEERLFDAFTALAGSGPAFVFSFIDALALAGVHQGFSYEQALRIALDTVMGSAKLLKEFQVNPNELIAKVTSPGGTTIEGIKYLEEKGFKGTVMECINRTSQKAKKL.

The protein belongs to the pyrroline-5-carboxylate reductase family.

Its subcellular location is the cytoplasm. It carries out the reaction L-proline + NADP(+) = (S)-1-pyrroline-5-carboxylate + NADPH + 2 H(+). It catalyses the reaction L-proline + NAD(+) = (S)-1-pyrroline-5-carboxylate + NADH + 2 H(+). The protein operates within amino-acid biosynthesis; L-proline biosynthesis; L-proline from L-glutamate 5-semialdehyde: step 1/1. Its function is as follows. Catalyzes the reduction of 1-pyrroline-5-carboxylate (PCA) to L-proline. The protein is Pyrroline-5-carboxylate reductase of Aquifex aeolicus (strain VF5).